Here is a 1007-residue protein sequence, read N- to C-terminus: MEVFPFLLVLSVWWSRTWDSANADSIIHIGAIFDESAKKDDEVFRTAVGDLNQNEEILQTEKITFSVTFVDGNNPFQAVQEACELMNQGILALVSSIGCTSAGSLQSLADAMHIPHLFIQRSTAGTPRSGCGLTRSNRNDDYTLSVRPPVYLHDVILRVVTEYAWQKFIIFYDSEYDIRGIQEFLDKVSQQGMDVALQKVENNINKMITTLFDTMRIEELNRYRDTLRRAILVMNPATAKSFITEVVETNLVAFDCHWIIINEEINDVDVQELVRRSIGRLTIIRQTFPVPQNISQRCFRGNHRISSTLCDPKDPFAQNMEISNLYIYDTVLLLANAFHKKLEDRKWHSMASLSCIRKNSKPWQGGRSMLETIKKGGVSGLTGELEFGENGGNPNVHFEILGTNYGEELGRGVRKLGCWNPVTGLNGSLTDKKLENNMRGVVLRVVTVLEEPFVMVSENVLGKPKKYQGFSIDVLDALSNYLGFNYEIYVAPDHKYGSPQEDGTWNGLVGELVFKRADIGISALTITPDRENVVDFTTRYMDYSVGVLLRRAEKTVDMFACLAPFDLSLWACIAGTVLLVGLLVYLLNWLNPPRLQMGSMTSTTLYNSMWFVYGSFVQQGGEVPYTTLATRMMMGAWWLFALIVISSYTANLAAFLTITRIESSIQSLQDLSKQTEIPYGTVLDSAVYEHVRMKGLNPFERDSMYSQMWRMINRSNGSENNVLESQAGIQKVKYGNYAFVWDAAVLEYVAINDPDCSFYTIGNTVADRGYGIALQHGSPYRDVFSQRILELQQNGDMDILKHKWWPKNGQCDLYSSVDTKQKGGALDIKSFAGVFCILAAGIVLSCFIAMLETWWNKRKGSRVPSKEDDKEIDLEHLHRRVNSLCTDDDSPHKQFSTSSIDLTPLDIDTLPTRQALEQISDFRNTHITTTTFIPEQIQTLSRTLSAKAASGFTFGNVPEHRTGPFRHRAPNGGFFRSPIKTMSSIPYQPTPTLGLNLGNDPDRGTSI.

The first 23 residues, 1-23, serve as a signal peptide directing secretion; the sequence is MEVFPFLLVLSVWWSRTWDSANA. An interaction with CBLN1 homotrimer region spans residues 24–345; the sequence is DSIIHIGAIF…NAFHKKLEDR (322 aa). Over 24–566 the chain is Extracellular; the sequence is DSIIHIGAIF…DMFACLAPFD (543 aa). 3 disulfides stabilise this stretch: Cys-83–Cys-355, Cys-99–Cys-131, and Cys-298–Cys-310. Asn-293 carries N-linked (GlcNAc...) asparagine glycosylation. Residue Asn-426 is glycosylated (N-linked (GlcNAc...) asparagine). Positions 531, 534, and 535 each coordinate Ca(2+). A helical transmembrane segment spans residues 567–587; sequence LSLWACIAGTVLLVGLLVYLL. Residues 588-635 lie on the Cytoplasmic side of the membrane; sequence NWLNPPRLQMGSMTSTTLYNSMWFVYGSFVQQGGEVPYTTLATRMMMG. Residues 636–656 form a helical membrane-spanning segment; the sequence is AWWLFALIVISSYTANLAAFL. The Extracellular portion of the chain corresponds to 657–830; that stretch reads TITRIESSIQ…QKGGALDIKS (174 aa). Residues Asn-713 and Asn-716 are each glycosylated (N-linked (GlcNAc...) asparagine). Positions 753, 755, and 757 each coordinate Ca(2+). The chain crosses the membrane as a helical span at residues 831–851; that stretch reads FAGVFCILAAGIVLSCFIAML. The Cytoplasmic portion of the chain corresponds to 852 to 1007; it reads ETWWNKRKGS…GNDPDRGTSI (156 aa). Ser-883 is subject to Phosphoserine. The residue at position 886 (Thr-886) is a Phosphothreonine. A Phosphoserine modification is found at Ser-890. The segment at 921–991 is interaction with AP4M1; it reads DFRNTHITTT…MSSIPYQPTP (71 aa). The PDZ-binding motif lies at 1005-1007; the sequence is TSI. Residue Ser-1006 is modified to Phosphoserine.

Belongs to the glutamate-gated ion channel (TC 1.A.10.1) family. GRID2 subfamily. In terms of assembly, tetramer; dimer of dimers. Interacts with EML2, MAGI2 (via PDZ domains) and AP4M1. Interacts with BECN1, GOPC, GRID2IP, SHANK1 and SHANK2. Interacts with CBLN2, but not with CBLN4. Interacts with CBLN1 (via C1q domain); the interaction is CBLN1-NRX1 complex formation-dependent; CBLN1-binding is calcium-independent; CBLN1 hexamers anchor GRID2 N-terminal domain dimers to monomeric NRXN1 isoform beta; promotes synaptogenesis and mediates the D-Serine-dependent long term depression signals and AMPA receptor endocytosis.

It is found in the postsynaptic cell membrane. It carries out the reaction Ca(2+)(in) = Ca(2+)(out). The catalysed reaction is Na(+)(in) = Na(+)(out). In terms of biological role, member of the ionotropic glutamate receptor family, which plays a crucial role in synaptic organization and signal transduction in the central nervous system. Although it shares structural features with ionotropic glutamate receptors, does not bind glutamate as a primary ligand. Promotes synaptogenesis and mediates the D-Serine-dependent long term depression signals and AMPA receptor endocytosis of cerebellar parallel fiber-Purkinje cell (PF-PC) synapses through the NRX1B-CBLN1-GRID2 triad complex. In the presence of neurexins and cerebellins, forms cation-selective channels that are proposed to be gated by glycine and D-serine. However, recent research disputes this ligand-gated cation channel activity. Cation-selective ion channel activity can be triggered by GRM1 in Purkinje cells. This is Glutamate receptor ionotropic, delta-2 (GRID2) from Homo sapiens (Human).